Consider the following 538-residue polypeptide: Putative cysteine ligase BshC (538 aa).

A coiled-coil region spans residues 460–484 (KINEQIELLERMLKRNVEKKHEVEL).

The protein belongs to the BshC family.

Involved in bacillithiol (BSH) biosynthesis. May catalyze the last step of the pathway, the addition of cysteine to glucosamine malate (GlcN-Mal) to generate BSH. The chain is Putative cysteine ligase BshC from Bacillus thuringiensis (strain Al Hakam).